The chain runs to 573 residues: Phosphomethylpyrimidine synthase (573 aa).

Residues asparagine 190, methionine 219, tyrosine 248, histidine 284, 304 to 306 (SRG), 345 to 348 (DGLR), and glutamate 384 each bind substrate. Histidine 388 is a Zn(2+) binding site. Tyrosine 411 is a substrate binding site. Histidine 452 is a binding site for Zn(2+). Cysteine 532, cysteine 535, and cysteine 540 together coordinate [4Fe-4S] cluster.

The protein belongs to the ThiC family. The cofactor is [4Fe-4S] cluster.

It catalyses the reaction 5-amino-1-(5-phospho-beta-D-ribosyl)imidazole + S-adenosyl-L-methionine = 4-amino-2-methyl-5-(phosphooxymethyl)pyrimidine + CO + 5'-deoxyadenosine + formate + L-methionine + 3 H(+). Its pathway is cofactor biosynthesis; thiamine diphosphate biosynthesis. Catalyzes the synthesis of the hydroxymethylpyrimidine phosphate (HMP-P) moiety of thiamine from aminoimidazole ribotide (AIR) in a radical S-adenosyl-L-methionine (SAM)-dependent reaction. This Geobacillus sp. (strain WCH70) protein is Phosphomethylpyrimidine synthase.